The following is a 317-amino-acid chain: tRNA(Met) cytidine acetate ligase (317 aa).

Residues 6–19 (IAEYNPFHNGHIYQ), G100, N157, and R182 contribute to the ATP site.

It belongs to the TmcAL family.

The protein resides in the cytoplasm. It catalyses the reaction cytidine(34) in elongator tRNA(Met) + acetate + ATP = N(4)-acetylcytidine(34) in elongator tRNA(Met) + AMP + diphosphate. In terms of biological role, catalyzes the formation of N(4)-acetylcytidine (ac(4)C) at the wobble position of elongator tRNA(Met), using acetate and ATP as substrates. First activates an acetate ion to form acetyladenylate (Ac-AMP) and then transfers the acetyl group to tRNA to form ac(4)C34. The polypeptide is tRNA(Met) cytidine acetate ligase (Mesomycoplasma hyopneumoniae (strain J / ATCC 25934 / NCTC 10110) (Mycoplasma hyopneumoniae)).